We begin with the raw amino-acid sequence, 438 residues long: Trigger factor (438 aa).

In terms of domain architecture, PPIase FKBP-type spans 160–245 (DDKVVIDFVG…VKKIQEAQLP (86 aa)).

This sequence belongs to the FKBP-type PPIase family. Tig subfamily.

It is found in the cytoplasm. The enzyme catalyses [protein]-peptidylproline (omega=180) = [protein]-peptidylproline (omega=0). In terms of biological role, involved in protein export. Acts as a chaperone by maintaining the newly synthesized protein in an open conformation. Functions as a peptidyl-prolyl cis-trans isomerase. The chain is Trigger factor from Francisella philomiragia subsp. philomiragia (strain ATCC 25017 / CCUG 19701 / FSC 153 / O#319-036).